A 538-amino-acid chain; its full sequence is MFS-type transporter oryC (538 aa).

The next 6 helical transmembrane spans lie at 14–34 (LTGGWLTFWVTVACATDMSLF), 67–87 (TVTAIYDVGCFFGAIVAFTIG), 96–116 (ILLGTTIMAIGAVLQAASFSL), 120–140 (FVGRIILGIGNGINTATAPIW), 162–182 (IFGFCLVNWINYGLSFVGGSI), and 186–206 (FPLAFQFFFLIILWSTTPWLP). The N-linked (GlcNAc...) asparagine glycan is linked to asparagine 268. The next 6 membrane-spanning stretches (helical) occupy residues 288–308 (FGGINIMSYYLPTVLMDSVGL), 315–335 (LLAACNALSYLVFSGLAVLLV), 342–362 (GLMLLSTFGQFLCFLIITILL), 379–399 (VAFFFLYYGAFGIGMLGVPWL), 416–436 (VATATDWITNFVVVEITPIGI), and 443–463 (FWIVWTVTNAAFLPILYFLYP). Asparagine 467 is a glycosylation site (N-linked (GlcNAc...) asparagine).

The protein belongs to the major facilitator superfamily. Sugar transporter (TC 2.A.1.1) family.

The protein resides in the membrane. Its function is as follows. MFS-type transporter; part of the gene cluster that mediates the biosynthesis of oryzines, natural products with an unusual maleidride backbone. The sequence is that of MFS-type transporter oryC from Aspergillus oryzae (strain ATCC 42149 / RIB 40) (Yellow koji mold).